Consider the following 158-residue polypeptide: Ribosomal RNA large subunit methyltransferase H (158 aa).

S-adenosyl-L-methionine-binding positions include leucine 73, glycine 107, and 126–131 (FGEITL).

This sequence belongs to the RNA methyltransferase RlmH family. Homodimer.

Its subcellular location is the cytoplasm. It catalyses the reaction pseudouridine(1915) in 23S rRNA + S-adenosyl-L-methionine = N(3)-methylpseudouridine(1915) in 23S rRNA + S-adenosyl-L-homocysteine + H(+). Specifically methylates the pseudouridine at position 1915 (m3Psi1915) in 23S rRNA. The chain is Ribosomal RNA large subunit methyltransferase H from Rubrobacter xylanophilus (strain DSM 9941 / JCM 11954 / NBRC 16129 / PRD-1).